Reading from the N-terminus, the 126-residue chain is Holo-[acyl-carrier-protein] synthase (126 aa).

The Mg(2+) site is built by Asp9 and Glu58.

It belongs to the P-Pant transferase superfamily. AcpS family. Requires Mg(2+) as cofactor.

It localises to the cytoplasm. The enzyme catalyses apo-[ACP] + CoA = holo-[ACP] + adenosine 3',5'-bisphosphate + H(+). In terms of biological role, transfers the 4'-phosphopantetheine moiety from coenzyme A to a Ser of acyl-carrier-protein. In Yersinia enterocolitica serotype O:8 / biotype 1B (strain NCTC 13174 / 8081), this protein is Holo-[acyl-carrier-protein] synthase.